A 376-amino-acid chain; its full sequence is Nuclear egress protein 1 (376 aa).

Ser19 bears the Phosphoserine mark. The interval 22-57 is disordered; sequence RKRRQRELASKVASTVNGATSANNHGEPPSPADARP. A compositionally biased stretch (polar residues) spans 33-45; it reads VASTVNGATSANN. The CCCH-type zinc-finger motif lies at 106 to 211; sequence CLDISPYGNE…HVIFENPDVH (106 aa). Positions 316 to 376 are disordered; the sequence is VVSTNGCGPS…PLFLNSIRAP (61 aa). Residues 317–332 show a composition bias toward polar residues; that stretch reads VSTNGCGPSSSSQSTP.

This sequence belongs to the herpesviridae NEC1 protein family. Forms a heterohexameric complex with NEC2. Interacts with capsid vertex specific component 2/CVC2; this interaction directs the capsid to the host inner nuclear membrane to initiate budding. In terms of processing, phosphorylated at serine residues in the N-terminus. This phosphorylation regulates the localization within the inner nuclear membrane. Phosphorylation by viral kinase UL97 at Ser-19 plays an important role for correct viral nuclear egress complex (NEC) localization.

The protein localises to the host nucleus inner membrane. Plays an essential role in virion nuclear egress, the first step of virion release from infected cell. Within the host nucleus, NEC1 interacts with the newly formed capsid through the vertexes and directs it to the inner nuclear membrane by associating with NEC2. Induces the budding of the capsid at the inner nuclear membrane as well as its envelopment into the perinuclear space. There, the NEC1/NEC2 complex promotes the fusion of the enveloped capsid with the outer nuclear membrane and the subsequent release of the viral capsid into the cytoplasm where it will reach the secondary budding sites in the host Golgi or trans-Golgi network. This Homo sapiens (Human) protein is Nuclear egress protein 1.